Reading from the N-terminus, the 97-residue chain is YcgL domain-containing protein Avin_32960 (97 aa).

One can recognise a YcgL domain in the interval 3–87; that stretch reads CICSIYKSPR…PEEEYVEHLP (85 aa).

In Azotobacter vinelandii (strain DJ / ATCC BAA-1303), this protein is YcgL domain-containing protein Avin_32960.